A 155-amino-acid chain; its full sequence is MAPVTLSTVDTDLKDVIQHLFEIQSAVHGYLGPETQQELVRKIKNLTLALSTLSSHTQSHAPDADTAQANPSDPPISTIELPPEIIDYVDAARNPDIYTREFVELVQRGNQDLKGKKEAFAGFRDVLAREMRSAMPECRGEVDRVVRATGGGEES.

The segment at 54 to 80 (SSHTQSHAPDADTAQANPSDPPISTIE) is disordered.

It belongs to the Mediator complex subunit 10 family. As to quaternary structure, component of the Mediator complex.

Its subcellular location is the nucleus. In terms of biological role, component of the Mediator complex, a coactivator involved in the regulated transcription of nearly all RNA polymerase II-dependent genes. Mediator functions as a bridge to convey information from gene-specific regulatory proteins to the basal RNA polymerase II transcription machinery. Mediator is recruited to promoters by direct interactions with regulatory proteins and serves as a scaffold for the assembly of a functional preinitiation complex with RNA polymerase II and the general transcription factors. In Aspergillus terreus (strain NIH 2624 / FGSC A1156), this protein is Mediator of RNA polymerase II transcription subunit 10 (nut2).